The primary structure comprises 272 residues: MKKYLLGIGLILALIACKQNVSSLDEKNSVSVDVPGGMKVLVSKEKNKDGKYDLMATVDNVDLKGTSDKNNGSGILEGVKADKSKVKLTVADDLSKTTLEVLKEDGTVVSRKVTSKDKSTTEAKFNEKGELSEKTMTRANGTTLEYSQMTNEDNAAKAVETLKNGIKFEGNLASGKTAVEIKEGTVTLKREIDKNGKVTVSLNDTASGSKKTASWQESTSTLTISANSKKTKDLVFLTNGTITVQNYDSAGTKLEGSAAEIKKLDELKNALR.

An N-terminal signal peptide occupies residues 1-16 (MKKYLLGIGLILALIA). Residue Cys-17 is the site of N-palmitoyl cysteine attachment. Cys-17 is lipidated: S-diacylglycerol cysteine.

It belongs to the OspA lipoprotein family.

The protein localises to the cell outer membrane. The protein resides in the cell surface. The polypeptide is Outer surface protein A (Borreliella burgdorferi (Lyme disease spirochete)).